The primary structure comprises 334 residues: N-acetyl-gamma-glutamyl-phosphate reductase (334 aa).

Cys-154 is a catalytic residue.

This sequence belongs to the NAGSA dehydrogenase family. Type 1 subfamily.

The protein resides in the cytoplasm. The catalysed reaction is N-acetyl-L-glutamate 5-semialdehyde + phosphate + NADP(+) = N-acetyl-L-glutamyl 5-phosphate + NADPH + H(+). The protein operates within amino-acid biosynthesis; L-arginine biosynthesis; N(2)-acetyl-L-ornithine from L-glutamate: step 3/4. Functionally, catalyzes the NADPH-dependent reduction of N-acetyl-5-glutamyl phosphate to yield N-acetyl-L-glutamate 5-semialdehyde. This is N-acetyl-gamma-glutamyl-phosphate reductase from Yersinia pseudotuberculosis serotype I (strain IP32953).